We begin with the raw amino-acid sequence, 349 residues long: Thioredoxin reductase, mitochondrial (349 aa).

Residues 1-30 (MLLVRNSTLGRLSSLRGFFRNINESNIFYR) constitute a mitochondrion transit peptide. Residues 41–44 (SGPA), 70–71 (IA), glutamine 75, asparagine 84, valine 117, cysteine 175, aspartate 318, and 325–327 (RQA) each bind FAD. A disulfide bridge connects residues cysteine 172 and cysteine 175.

Belongs to the class-II pyridine nucleotide-disulfide oxidoreductase family. As to quaternary structure, homodimer. Requires FAD as cofactor.

It is found in the mitochondrion. It carries out the reaction [thioredoxin]-dithiol + NADP(+) = [thioredoxin]-disulfide + NADPH + H(+). The sequence is that of Thioredoxin reductase, mitochondrial (TRR1) from Kluyveromyces lactis (strain ATCC 8585 / CBS 2359 / DSM 70799 / NBRC 1267 / NRRL Y-1140 / WM37) (Yeast).